Here is a 223-residue protein sequence, read N- to C-terminus: Probable GTP-binding protein EngB (223 aa).

The EngB-type G domain occupies 49-223; it reads MGVEIAFAGR…LRAALAGLTD (175 aa). Residues 57–64, 84–88, 102–105, 169–172, and 203–205 each bind GTP; these read GRSNVGKS, GRTKQ, DMPG, TKAD, and TSS. Mg(2+) contacts are provided by Ser-64 and Thr-86.

The protein belongs to the TRAFAC class TrmE-Era-EngA-EngB-Septin-like GTPase superfamily. EngB GTPase family. Mg(2+) serves as cofactor.

Its function is as follows. Necessary for normal cell division and for the maintenance of normal septation. This chain is Probable GTP-binding protein EngB, found in Granulibacter bethesdensis (strain ATCC BAA-1260 / CGDNIH1).